Here is a 657-residue protein sequence, read N- to C-terminus: Transketolase (657 aa).

Position 31 (His-31) interacts with substrate. Thiamine diphosphate-binding positions include His-71 and 120 to 122 (GPL). Asp-158 serves as a coordination point for Mg(2+). Thiamine diphosphate contacts are provided by Gly-159 and Asn-188. Mg(2+) is bound by residues Asn-188 and Ile-190. Residues His-262, Arg-354, and Ser-381 each contribute to the substrate site. His-262 contacts thiamine diphosphate. The active-site Proton donor is the Glu-408. A thiamine diphosphate-binding site is contributed by Phe-434. Positions 458, 466, and 517 each coordinate substrate.

This sequence belongs to the transketolase family. As to quaternary structure, homodimer. It depends on Mg(2+) as a cofactor. Requires Ca(2+) as cofactor. The cofactor is Mn(2+). Co(2+) is required as a cofactor. Thiamine diphosphate serves as cofactor.

It catalyses the reaction D-sedoheptulose 7-phosphate + D-glyceraldehyde 3-phosphate = aldehydo-D-ribose 5-phosphate + D-xylulose 5-phosphate. It participates in carbohydrate biosynthesis; Calvin cycle. Its pathway is carbohydrate degradation; pentose phosphate pathway. Functionally, catalyzes the transfer of a two-carbon ketol group from a ketose donor to an aldose acceptor, via a covalent intermediate with the cofactor thiamine pyrophosphate. In Cereibacter sphaeroides (Rhodobacter sphaeroides), this protein is Transketolase (tklB).